The primary structure comprises 218 residues: Small ribosomal subunit protein uS3c (218 aa).

In terms of domain architecture, KH type-2 spans 39 to 109 (IRNYVKVNLS…QIRINVTELK (71 aa)).

It belongs to the universal ribosomal protein uS3 family. In terms of assembly, part of the 30S ribosomal subunit.

The protein resides in the plastid. Its subcellular location is the chloroplast. In Rhodomonas salina (Cryptomonas salina), this protein is Small ribosomal subunit protein uS3c (rps3).